A 473-amino-acid polypeptide reads, in one-letter code: O-methyltransferase ARMGADRAFT_1088206 (473 aa).

S-adenosyl-L-methionine contacts are provided by residues 276–277 (AG), Asp-299, 330–331 (DM), and Arg-348. Residue His-352 is the Proton acceptor of the active site.

Belongs to the class I-like SAM-binding methyltransferase superfamily. Cation-independent O-methyltransferase family.

It participates in secondary metabolite biosynthesis. Its function is as follows. O-methyltransferase, part of the gene cluster that mediates the biosynthesis of melleolides, a range of antifungal and phytotoxic polyketide derivatives composed of an orsellinic acid (OA) moiety esterified to various sesquiterpene alcohols. The first step in melleolides biosynthesis is performed by the delta(6)-protoilludene synthase PRO1 which catalyzes the cyclization of farnesyl diphosphate to protoilludene. The orsellinic acid synthase armB produces OA by condensing acetyl-CoA with 3 malonyl-CoA units in a three-round chain elongation reaction folowed by a C2-C7 ring closure. ArmB further catalyzes the trans-esterification of OA to the various sesquiterpene alcohols resulting from the hydroxylation of protoilludene. The melleolides cluster also includes 5 cytochrome P450 monooxygenases, 4 NAD(+)-dependent oxidoreductases, one flavin-dependent oxidoreductase, and one O-methyltransferase. The cytochrome P450 monooxygenases may be involved in protoilludene hydroxylation to elaborate melleolides with multiple alcohol groups, such as melleolide D, which carries alcohol functionalities at C-4, C-5, C-10, and C-13. The role of the NAD(+)-dependent enzymes remains unknown. Numerous melleolides, including arnamial, show 5'-O-methylation of the aromatic moiety which may be catalyzed by the methyltransferase encoded in the cluster. The flavin-dependent oxidoreductase might represent the dehydrogenase yielding the aldehyde in position 1 of arnamial and other melleolides. Finally, several halogenase localized outside of the cluster, are able to catalyze the transfer of a single chlorine atom to the melleolide backbone, resulting in a 6'-chloromelleolide product. This Armillaria gallica (Bulbous honey fungus) protein is O-methyltransferase ARMGADRAFT_1088206.